Here is a 98-residue protein sequence, read N- to C-terminus: NADH-ubiquinone oxidoreductase chain 4L (98 aa).

A run of 3 helical transmembrane segments spans residues 2–22, 29–49, and 61–81; these read PSIS…MLMF, SLLC…LIIL, and ILLL…LVTV.

Belongs to the complex I subunit 4L family. In terms of assembly, core subunit of respiratory chain NADH dehydrogenase (Complex I) which is composed of 45 different subunits.

It is found in the mitochondrion inner membrane. It catalyses the reaction a ubiquinone + NADH + 5 H(+)(in) = a ubiquinol + NAD(+) + 4 H(+)(out). In terms of biological role, core subunit of the mitochondrial membrane respiratory chain NADH dehydrogenase (Complex I) which catalyzes electron transfer from NADH through the respiratory chain, using ubiquinone as an electron acceptor. Part of the enzyme membrane arm which is embedded in the lipid bilayer and involved in proton translocation. The sequence is that of NADH-ubiquinone oxidoreductase chain 4L (MT-ND4L) from Microcebus mamiratra (Claire's mouse lemur).